We begin with the raw amino-acid sequence, 162 residues long: MWRVEFVACLRPSCQFCTAMCSILSAGRAWRMMNFRQRMGWIGVSLYLFVSAAAFYYVFEINETYNRLALEHVQLKPQEPHRGTTWTHSLKARLLSLPFWLWAALFLIPYFQVFLFLYSCTRADPKTVGYCIIPICLAIICNRHQSFVKASNQISRLQLIDT.

2 helical membrane-spanning segments follow: residues 39 to 59 (MGWIGVSLYLFVSAAAFYYVF) and 97 to 117 (LPFWLWAALFLIPYFQVFLFL).

This sequence belongs to the LYSET family.

It localises to the golgi apparatus membrane. Required for mannose-6-phosphate-dependent trafficking of lysosomal enzymes. LYSET bridges GlcNAc-1-phosphate transferase (GNPTAB), to the membrane-bound transcription factor site-1 protease (MBTPS1), thus allowing proteolytic activation of the GNPTAB. GNPTAB is involved in the regulation of M6P-dependent Golgi-to-lysosome trafficking of lysosomal enzymes. LYSET is thus an essential factor for maturation and delivery of lysosomal hydrolases. This chain is Lysosomal enzyme trafficking factor (lyset), found in Xenopus tropicalis (Western clawed frog).